Consider the following 227-residue polypeptide: Small ribosomal subunit protein uS3 (227 aa).

The region spanning 39 to 107 is the KH type-2 domain; sequence VRQLLQKRLK…PVHITIEEVR (69 aa).

Belongs to the universal ribosomal protein uS3 family. In terms of assembly, part of the 30S ribosomal subunit. Forms a tight complex with proteins S10 and S14.

Its function is as follows. Binds the lower part of the 30S subunit head. Binds mRNA in the 70S ribosome, positioning it for translation. In Coxiella burnetii (strain RSA 493 / Nine Mile phase I), this protein is Small ribosomal subunit protein uS3 (rpsC).